Reading from the N-terminus, the 490-residue chain is Cytochrome P450 2C1 (490 aa).

Residue Cys435 participates in heme binding.

The protein belongs to the cytochrome P450 family. Heme is required as a cofactor.

The protein localises to the endoplasmic reticulum membrane. The protein resides in the microsome membrane. It carries out the reaction an organic molecule + reduced [NADPH--hemoprotein reductase] + O2 = an alcohol + oxidized [NADPH--hemoprotein reductase] + H2O + H(+). Cytochromes P450 are a group of heme-thiolate monooxygenases. In liver microsomes, this enzyme is involved in an NADPH-dependent electron transport pathway. It oxidizes a variety of structurally unrelated compounds, including steroids, fatty acids, and xenobiotics. The sequence is that of Cytochrome P450 2C1 (CYP2C1) from Oryctolagus cuniculus (Rabbit).